Here is a 248-residue protein sequence, read N- to C-terminus: MRRPIIAGNWKMHMTPSEAVKLVEELIPQVKDAKAEVVVIPPFVDLTEVNKVIQGTNILLGAQDMFWEEKGAYTGEISPLMLKEIGVKYVVIGHSERRQYFGETDEMVNKKVLSALSHGLSPIVCVGESLSQREEGKTFEVVLNQTKEALKGVSHDDIVNVVIAYEPIWAIGTGKTATAKDANEVIKALRNTIASLYGKEKASLVRIQYGGSVKPENISELMAESDIDGALVGGASLVASDFAKIVNY.

Substrate is bound at residue 9 to 11 (NWK). The Electrophile role is filled by H94. The active-site Proton acceptor is the E166. Substrate is bound by residues G172, S212, and 233–234 (GG).

This sequence belongs to the triosephosphate isomerase family. Homodimer.

It is found in the cytoplasm. The enzyme catalyses D-glyceraldehyde 3-phosphate = dihydroxyacetone phosphate. It functions in the pathway carbohydrate biosynthesis; gluconeogenesis. The protein operates within carbohydrate degradation; glycolysis; D-glyceraldehyde 3-phosphate from glycerone phosphate: step 1/1. Involved in the gluconeogenesis. Catalyzes stereospecifically the conversion of dihydroxyacetone phosphate (DHAP) to D-glyceraldehyde-3-phosphate (G3P). This chain is Triosephosphate isomerase, found in Thermoanaerobacter pseudethanolicus (strain ATCC 33223 / 39E) (Clostridium thermohydrosulfuricum).